A 637-amino-acid chain; its full sequence is DNA damage-binding protein CMR1 (637 aa).

Disordered stretches follow at residues 1-91 (MIES…EEEA) and 144-168 (LVDT…TERR). 2 stretches are compositionally biased toward basic and acidic residues: residues 8–23 (EQER…RLMK) and 74–91 (AGHE…EEEA). WD repeat units lie at residues 185–226 (VTPK…FASN), 255–295 (HARS…SEEI), 297–321 (AGEE…VYMD), 361–401 (VCEK…SVVK), and 431–470 (KARQ…LFSE). 2 disordered regions span residues 482-508 (SNKP…LSWL) and 525-549 (KQEQ…PTRI). WD repeat units follow at residues 556–598 (GKWL…LRSL) and 602–637 (NLVT…SPDP).

The protein belongs to the WD repeat DDB2/WDR76 family.

Functionally, DNA-binding protein that binds to both single- and double-stranded DNA. Binds preferentially to UV-damaged DNA. May be involved in DNA-metabolic processes. The polypeptide is DNA damage-binding protein CMR1 (Mycosarcoma maydis (Corn smut fungus)).